A 267-amino-acid polypeptide reads, in one-letter code: Dihydropteroate synthase (267 aa).

In terms of domain architecture, Pterin-binding spans methionine 1–lysine 251. Residue asparagine 11 coordinates Mg(2+). Residues threonine 51, aspartate 84, asparagine 103, aspartate 167, lysine 203, and arginine 239–histidine 241 each bind (7,8-dihydropterin-6-yl)methyl diphosphate.

Belongs to the DHPS family. As to quaternary structure, homodimer. Mg(2+) serves as cofactor.

The catalysed reaction is (7,8-dihydropterin-6-yl)methyl diphosphate + 4-aminobenzoate = 7,8-dihydropteroate + diphosphate. It functions in the pathway cofactor biosynthesis; tetrahydrofolate biosynthesis; 7,8-dihydrofolate from 2-amino-4-hydroxy-6-hydroxymethyl-7,8-dihydropteridine diphosphate and 4-aminobenzoate: step 1/2. Functionally, catalyzes the condensation of para-aminobenzoate (pABA) with 6-hydroxymethyl-7,8-dihydropterin diphosphate (DHPt-PP) to form 7,8-dihydropteroate (H2Pte), the immediate precursor of folate derivatives. This Staphylococcus aureus (strain MSSA476) protein is Dihydropteroate synthase (folP).